Here is a 271-residue protein sequence, read N- to C-terminus: Glutamate racemase (271 aa).

Residues 12–13 and 44–45 contribute to the substrate site; these read DS and YG. The Proton donor/acceptor role is filled by C75. Substrate is bound at residue 76–77; that stretch reads NT. C185 serves as the catalytic Proton donor/acceptor. 186–187 contacts substrate; that stretch reads TH.

The protein belongs to the aspartate/glutamate racemases family.

It catalyses the reaction L-glutamate = D-glutamate. It participates in cell wall biogenesis; peptidoglycan biosynthesis. Provides the (R)-glutamate required for cell wall biosynthesis. This Mycobacterium marinum (strain ATCC BAA-535 / M) protein is Glutamate racemase.